We begin with the raw amino-acid sequence, 260 residues long: Phosphatidylglycerol--prolipoprotein diacylglyceryl transferase (260 aa).

Helical transmembrane passes span 17 to 37 (VVKW…SWIF), 52 to 72 (LTAA…LHVI), 85 to 105 (IFSG…IGLW), and 113 to 133 (FNLG…QAIG). Arg-134 contacts a 1,2-diacyl-sn-glycero-3-phospho-(1'-sn-glycerol). The next 3 membrane-spanning stretches (helical) occupy residues 170-190 (APTQ…SLFI), 198-218 (GQLF…IGFV), and 227-247 (GLEQ…PLFI).

Belongs to the Lgt family.

Its subcellular location is the cell membrane. It carries out the reaction L-cysteinyl-[prolipoprotein] + a 1,2-diacyl-sn-glycero-3-phospho-(1'-sn-glycerol) = an S-1,2-diacyl-sn-glyceryl-L-cysteinyl-[prolipoprotein] + sn-glycerol 1-phosphate + H(+). The protein operates within protein modification; lipoprotein biosynthesis (diacylglyceryl transfer). Its function is as follows. Catalyzes the transfer of the diacylglyceryl group from phosphatidylglycerol to the sulfhydryl group of the N-terminal cysteine of a prolipoprotein, the first step in the formation of mature lipoproteins. This Dehalococcoides mccartyi (strain ATCC BAA-2100 / JCM 16839 / KCTC 5957 / BAV1) protein is Phosphatidylglycerol--prolipoprotein diacylglyceryl transferase.